We begin with the raw amino-acid sequence, 570 residues long: 15-cis-phytoene desaturase, chloroplastic/chromoplastic (570 aa).

The N-terminal 91 residues, 1 to 91 (MSIVGLVSVV…AQLSASFRSS (91 aa)), are a transit peptide targeting the chloroplast and chromoplast. Residues 104–120 (GAGL…ADAG), Ala-108, 127–128 (ES), Lys-135, 152–153 (HI), and Tyr-158 contribute to the FAD site. Position 293 (Arg-293) interacts with substrate. Asp-524 provides a ligand contact to FAD. Ala-532 contacts substrate. Met-534 contributes to the FAD binding site.

This sequence belongs to the carotenoid/retinoid oxidoreductase family. In terms of assembly, homotetramer. It depends on FAD as a cofactor. As to expression, expressed more strongly in flowers than in leaves.

It localises to the plastid. The protein localises to the chloroplast. It is found in the chromoplast. Its subcellular location is the membrane. It catalyses the reaction 2 a plastoquinone + 15-cis-phytoene = 9,9',15-tri-cis-zeta-carotene + 2 a plastoquinol. It participates in carotenoid biosynthesis; lycopene biosynthesis. Functionally, converts phytoene into zeta-carotene via the intermediary of phytofluene by the symmetrical introduction of two double bonds at the C-11 and C-11' positions of phytoene with a concomitant isomerization of two neighboring double bonds at the C9 and C9' positions from trans to cis. The polypeptide is 15-cis-phytoene desaturase, chloroplastic/chromoplastic (PDS1) (Narcissus pseudonarcissus (Daffodil)).